The sequence spans 207 residues: Dephospho-CoA kinase (207 aa).

One can recognise a DPCK domain in the interval 5–203 (AVGLTGGVAC…ARYRALASVF (199 aa)). Residue 13–18 (ACGKSL) coordinates ATP.

The protein belongs to the CoaE family.

It localises to the cytoplasm. The catalysed reaction is 3'-dephospho-CoA + ATP = ADP + CoA + H(+). It functions in the pathway cofactor biosynthesis; coenzyme A biosynthesis; CoA from (R)-pantothenate: step 5/5. Functionally, catalyzes the phosphorylation of the 3'-hydroxyl group of dephosphocoenzyme A to form coenzyme A. The polypeptide is Dephospho-CoA kinase (Xylella fastidiosa (strain Temecula1 / ATCC 700964)).